A 152-amino-acid chain; its full sequence is Aspartate carbamoyltransferase regulatory chain (152 aa).

Positions 107, 112, 136, and 139 each coordinate Zn(2+).

This sequence belongs to the PyrI family. Contains catalytic and regulatory chains. Requires Zn(2+) as cofactor.

Involved in allosteric regulation of aspartate carbamoyltransferase. This Chromobacterium violaceum (strain ATCC 12472 / DSM 30191 / JCM 1249 / CCUG 213 / NBRC 12614 / NCIMB 9131 / NCTC 9757 / MK) protein is Aspartate carbamoyltransferase regulatory chain.